The sequence spans 84 residues: Elongation factor 1-beta (84 aa).

The protein belongs to the EF-1-beta/EF-1-delta family.

Functionally, promotes the exchange of GDP for GTP in EF-1-alpha/GDP, thus allowing the regeneration of EF-1-alpha/GTP that could then be used to form the ternary complex EF-1-alpha/GTP/AAtRNA. This chain is Elongation factor 1-beta, found in Methanoculleus marisnigri (strain ATCC 35101 / DSM 1498 / JR1).